The sequence spans 107 residues: Thioredoxin 1 (107 aa).

The region spanning Ser-2–Leu-107 is the Thioredoxin domain. Cysteines 32 and 35 form a disulfide.

The protein belongs to the thioredoxin family.

Its function is as follows. Participates in various redox reactions through the reversible oxidation of its active center dithiol to a disulfide and catalyzes dithiol-disulfide exchange reactions. This chain is Thioredoxin 1 (trxA), found in Nostoc sp. (strain PCC 7120 / SAG 25.82 / UTEX 2576).